The sequence spans 355 residues: Glucose-6-phosphatase 2 (355 aa).

The Lumenal segment spans residues 1 to 24; that stretch reads MDFLHRSGVLIIHHLQEDYRTYYG. Residues 25-45 traverse the membrane as a helical segment; the sequence is FLNFMSNVGDPRNIFSIYFPL. At 46 to 56 the chain is on the cytoplasmic side; it reads WFQLNQNVGTK. Residues 57 to 77 form a helical membrane-spanning segment; sequence MIWVAVIGDWFNLIFKWILFG. The Lumenal portion of the chain corresponds to 78-115; the sequence is HRPYWWIQETEIYPNHSSPCLEQFPTTCETGPGSPSGH. Arg-79 lines the substrate pocket. A glycan (N-linked (GlcNAc...) asparagine) is linked at Asn-92. The Proton donor role is filled by His-115. The helical transmembrane segment at 116-136 threads the bilayer; it reads AMGSSCVWYVMVTAALSYTIS. Residues 137 to 146 are Cytoplasmic-facing; that stretch reads RMEESSVTLH. Residues 147 to 167 traverse the membrane as a helical segment; it reads RLTWSFLWSVFWLIQISVCIS. Arg-168 is a topological domain (lumenal). Residue Arg-168 coordinates substrate. Residues 169 to 189 form a helical membrane-spanning segment; the sequence is VFIATHFPHQVILGVIGGMLV. Residue His-174 is the Nucleophile of the active site. Residues 190–211 are Cytoplasmic-facing; it reads AEAFEHTPGVHMASLSVYLKTN. The chain crosses the membrane as a helical span at residues 212–232; that stretch reads VFLFLFALGFYLLLRLFGIDL. At 233–252 the chain is on the lumenal side; sequence LWSVPIAKKWCANPDWIHID. A helical transmembrane segment spans residues 253-273; sequence STPFAGLVRNLGVLFGLGFAI. The Cytoplasmic portion of the chain corresponds to 274-290; that stretch reads NSEMFLRSCQGENGTKP. A helical transmembrane segment spans residues 291 to 307; sequence SFRLLCALTSLTTMQLY. The Lumenal segment spans residues 308–318; it reads RFIKIPTHAEP. Residues 319-339 traverse the membrane as a helical segment; it reads LFYLLSFCKSASIPLMVVALI. The Cytoplasmic portion of the chain corresponds to 340 to 355; sequence PYCVHMLMRPGDKKTK. Residues 352–355 carry the Prevents secretion from ER motif; that stretch reads KKTK.

Belongs to the glucose-6-phosphatase family. In terms of processing, N-glycosylated; the non-glycosylated form is more unstable and is degraded through the proteasome. In terms of tissue distribution, specifically expressed in pancreatic islet cells, in particular those of beta-cell origin. Not detected in testis, kidney, muscle, liver, lung, spleen, brain, pituitary, gastric fundus or heart.

It localises to the endoplasmic reticulum membrane. The catalysed reaction is D-glucose 6-phosphate + H2O = D-glucose + phosphate. Its pathway is carbohydrate biosynthesis; gluconeogenesis. Functionally, may hydrolyze glucose-6-phosphate to glucose in the endoplasmic reticulum. May be responsible for glucose production through glycogenolysis and gluconeogenesis. This chain is Glucose-6-phosphatase 2 (G6pc2), found in Mus musculus (Mouse).